The chain runs to 311 residues: MSNASLLTAFILMGLPHAPALDAPLFGVFLVVYVLTVLGNLLILLVIRVDSHLHTTMYYFLTNLSFIDMWFSTVTVPKLLMTLVFPSGRAISFHSCMAQLYFFHFLGGTECFLYRVMSCDRYLAISYPLRYTSMMTGRSCTLLATSTWLSGSLHSAVQAILTFHLPYCGPNWIQHYLCDAPPILKLACADTSAIETVIFVTVGIVASGCFVLIVLSYVSIVCSILRIRTSEGKHRAFQTCASHCIVVLCFFGPGLFIYLRPGSRKAVDGVVAVFYTVLTPLLNPVVYTLRNKEVKKALLKLKDKVAHSQSK.

The Extracellular segment spans residues 1-23 (MSNASLLTAFILMGLPHAPALDA). A glycan (N-linked (GlcNAc...) asparagine) is linked at N3. Residues 24 to 44 (PLFGVFLVVYVLTVLGNLLIL) form a helical membrane-spanning segment. Over 45 to 52 (LVIRVDSH) the chain is Cytoplasmic. A helical membrane pass occupies residues 53–73 (LHTTMYYFLTNLSFIDMWFST). The Extracellular portion of the chain corresponds to 74-98 (VTVPKLLMTLVFPSGRAISFHSCMA). Cysteines 96 and 188 form a disulfide. The helical transmembrane segment at 99–119 (QLYFFHFLGGTECFLYRVMSC) threads the bilayer. Residues 120–138 (DRYLAISYPLRYTSMMTGR) lie on the Cytoplasmic side of the membrane. The chain crosses the membrane as a helical span at residues 139-159 (SCTLLATSTWLSGSLHSAVQA). Residues 160–196 (ILTFHLPYCGPNWIQHYLCDAPPILKLACADTSAIET) lie on the Extracellular side of the membrane. Residues 197–216 (VIFVTVGIVASGCFVLIVLS) traverse the membrane as a helical segment. Topologically, residues 217–236 (YVSIVCSILRIRTSEGKHRA) are cytoplasmic. A helical membrane pass occupies residues 237 to 257 (FQTCASHCIVVLCFFGPGLFI). Residues 258 to 268 (YLRPGSRKAVD) are Extracellular-facing. The helical transmembrane segment at 269–289 (GVVAVFYTVLTPLLNPVVYTL) threads the bilayer. Residues 290–311 (RNKEVKKALLKLKDKVAHSQSK) lie on the Cytoplasmic side of the membrane.

The protein belongs to the G-protein coupled receptor 1 family.

Its subcellular location is the cell membrane. Odorant receptor. This chain is Olfactory receptor 10G8 (OR10G8), found in Homo sapiens (Human).